The sequence spans 477 residues: Bifunctional protein HldE (477 aa).

The interval 1-318 (MKVTLPEFER…ENAVRGRADT (318 aa)) is ribokinase. N6-acetyllysine is present on Lys179. Residue 195-198 (NLSE) participates in ATP binding. Asp264 is a catalytic residue. The segment at 344-477 (MTNGVFDILH…IKKIQQDKKG (134 aa)) is cytidylyltransferase.

In the N-terminal section; belongs to the carbohydrate kinase PfkB family. This sequence in the C-terminal section; belongs to the cytidylyltransferase family. In terms of assembly, homodimer.

It carries out the reaction D-glycero-beta-D-manno-heptose 7-phosphate + ATP = D-glycero-beta-D-manno-heptose 1,7-bisphosphate + ADP + H(+). The catalysed reaction is D-glycero-beta-D-manno-heptose 1-phosphate + ATP + H(+) = ADP-D-glycero-beta-D-manno-heptose + diphosphate. The protein operates within nucleotide-sugar biosynthesis; ADP-L-glycero-beta-D-manno-heptose biosynthesis; ADP-L-glycero-beta-D-manno-heptose from D-glycero-beta-D-manno-heptose 7-phosphate: step 1/4. Its pathway is nucleotide-sugar biosynthesis; ADP-L-glycero-beta-D-manno-heptose biosynthesis; ADP-L-glycero-beta-D-manno-heptose from D-glycero-beta-D-manno-heptose 7-phosphate: step 3/4. In terms of biological role, catalyzes the phosphorylation of D-glycero-D-manno-heptose 7-phosphate at the C-1 position to selectively form D-glycero-beta-D-manno-heptose-1,7-bisphosphate. Functionally, catalyzes the ADP transfer from ATP to D-glycero-beta-D-manno-heptose 1-phosphate, yielding ADP-D-glycero-beta-D-manno-heptose. The polypeptide is Bifunctional protein HldE (Escherichia coli (strain 55989 / EAEC)).